A 485-amino-acid polypeptide reads, in one-letter code: Ribosomal protein uS12 methylthiotransferase RimO (485 aa).

The MTTase N-terminal domain occupies Pro-14–Pro-124. [4Fe-4S] cluster is bound by residues Cys-23, Cys-59, Cys-88, Cys-167, Cys-171, and Cys-174. In terms of domain architecture, Radical SAM core spans Leu-153–Glu-389. Residues Ala-392–His-468 form the TRAM domain.

Belongs to the methylthiotransferase family. RimO subfamily. The cofactor is [4Fe-4S] cluster.

The protein localises to the cytoplasm. The enzyme catalyses L-aspartate(89)-[ribosomal protein uS12]-hydrogen + (sulfur carrier)-SH + AH2 + 2 S-adenosyl-L-methionine = 3-methylsulfanyl-L-aspartate(89)-[ribosomal protein uS12]-hydrogen + (sulfur carrier)-H + 5'-deoxyadenosine + L-methionine + A + S-adenosyl-L-homocysteine + 2 H(+). Its function is as follows. Catalyzes the methylthiolation of an aspartic acid residue of ribosomal protein uS12. The chain is Ribosomal protein uS12 methylthiotransferase RimO from Deinococcus geothermalis (strain DSM 11300 / CIP 105573 / AG-3a).